A 577-amino-acid polypeptide reads, in one-letter code: Methionine--tRNA ligase, mitochondrial (577 aa).

The 'HIGH' region motif lies at 25–37 (PIFYVNAAPHIGH). The 'KMSKS' region signature appears at 329–333 (KMSKS). Lysine 332 is a binding site for ATP.

It belongs to the class-I aminoacyl-tRNA synthetase family.

The protein resides in the mitochondrion matrix. It catalyses the reaction tRNA(Met) + L-methionine + ATP = L-methionyl-tRNA(Met) + AMP + diphosphate. The protein is Methionine--tRNA ligase, mitochondrial (MSM1) of Candida albicans (Yeast).